The sequence spans 194 residues: 3-isopropylmalate dehydratase small subunit (194 aa).

This sequence belongs to the LeuD family. LeuD type 1 subfamily. In terms of assembly, heterodimer of LeuC and LeuD.

The enzyme catalyses (2R,3S)-3-isopropylmalate = (2S)-2-isopropylmalate. The protein operates within amino-acid biosynthesis; L-leucine biosynthesis; L-leucine from 3-methyl-2-oxobutanoate: step 2/4. Functionally, catalyzes the isomerization between 2-isopropylmalate and 3-isopropylmalate, via the formation of 2-isopropylmaleate. The protein is 3-isopropylmalate dehydratase small subunit of Limosilactobacillus fermentum (strain NBRC 3956 / LMG 18251) (Lactobacillus fermentum).